A 307-amino-acid chain; its full sequence is Manganese-dependent inorganic pyrophosphatase (307 aa).

Mn(2+) contacts are provided by His7, Asp11, Asp13, Asp66, His88, and Asp147.

The cofactor is Mn(2+).

It localises to the cytoplasm. The enzyme catalyses diphosphate + H2O = 2 phosphate + H(+). This Methanocaldococcus jannaschii (strain ATCC 43067 / DSM 2661 / JAL-1 / JCM 10045 / NBRC 100440) (Methanococcus jannaschii) protein is Manganese-dependent inorganic pyrophosphatase (ppaC).